We begin with the raw amino-acid sequence, 124 residues long: Large ribosomal subunit protein bL20c (124 aa).

Belongs to the bacterial ribosomal protein bL20 family.

The protein resides in the plastid. Its subcellular location is the chloroplast. Functionally, binds directly to 23S ribosomal RNA and is necessary for the in vitro assembly process of the 50S ribosomal subunit. It is not involved in the protein synthesizing functions of that subunit. This is Large ribosomal subunit protein bL20c from Stigeoclonium helveticum (Green alga).